The primary structure comprises 193 residues: Cerebellin-1 (193 aa).

A signal peptide spans 1 to 21; sequence MLGVVELLLLGAAWLAGPARG. N23 carries N-linked (GlcNAc...) asparagine glycosylation. The segment at 34-38 is essential for interaction with NRXN1 and linker of two C1q trimers into disulfide-linked hexamers; sequence CLVVC. In terms of domain architecture, C1q spans 57–193; it reads SGSAKVAFSA…TFSGFLVFPL (137 aa). The necessary for interaction with CBLN3, and homotrimerization stretch occupies residues 62 to 193; that stretch reads VAFSAIRSTN…TFSGFLVFPL (132 aa). N79 carries an N-linked (GlcNAc...) asparagine glycan. The interval 122–147 is essential for interaction with GRID2; sequence YNRQTIQVSLMLNGWPVISAFAGDQD.

As to quaternary structure, homohexamer; disulfide-linked homotrimers. The trimers are assembled via the globular C1q domains. The trimers associate via N-terminal cysteine residues to form disulfide-linked hexamers. May form oligomers with CBLN2, CBLN3 and CBLN4 prior to secretion. Once secreted, does not interact with other CBLN family members. Interacts with GRID1. Interacts with NRXN1 and NRXN2 long (alpha) and short (beta) isoforms produced by alternative promoter usage. Competes with NLGN1 for NRXN1-binding. Weakly interacts with NRXN3 short isoform and not at all with NRXN3 long isoform. Interacts (via C1q domain) with GRID2; GRID2-binding is calcium-independent; CBLN1 hexamers anchor GRID2 N-terminal domain dimers to monomeric NRXN1 isoform beta; promotes synaptogenesis and mediates the D-Serine-dependent long term depression signals and AMPA receptor endocytosis. The proteolytic processing to yield cerebellin seems to occur either prior to the secretion by presynaptic neurons and subsequent oligomerization or in some other location after release of the mature protein. In terms of processing, sialoglycoprotein.

It is found in the secreted. It localises to the postsynaptic cell membrane. Its function is as follows. Required for synapse integrity and synaptic plasticity. During cerebellar synapse formation, essential for the matching and maintenance of pre- and post-synaptic elements at parallel fiber-Purkinje cell synapses, the establishment of the proper pattern of climbing fiber-Purkinje cell innervation, and induction of long-term depression at parallel fiber-Purkinje cell synapses. Plays a role as a synaptic organizer that acts bidirectionally on both pre- and post-synaptic components. On the one hand induces accumulation of synaptic vesicles in the pre-synaptic part by binding with NRXN1 and in other hand induces clustering of GRID2 and its associated proteins at the post-synaptic site through association of GRID2. NRXN1-CBLN1-GRID2 complex directly induces parallel fiber protrusions that encapsulate spines of Purkinje cells leading to accumulation of GRID2 and synaptic vesicles. Required for CBLN3 export from the endoplasmic reticulum and secretion. NRXN1-CBLN1-GRID2 complex mediates the D-Serine-dependent long term depression signals and AMPA receptor endocytosis. Essential for long-term maintenance but not establishment of excitatory synapses. Inhibits the formation and function of inhibitory GABAergic synapses in cerebellar Purkinje cells. Functionally, the cerebellin peptide exerts neuromodulatory functions. Directly stimulates norepinephrine release via the adenylate cyclase/PKA-dependent signaling pathway; and indirectly enhances adrenocortical secretion in vivo, through a paracrine mechanism involving medullary catecholamine release. This is Cerebellin-1 from Bos taurus (Bovine).